The primary structure comprises 402 residues: MGSVNESCDNYVEIFNKINYFFRDDQVINGTEYSPKEFGYFITFAYMLIILFGAIGNFLTIIVVILNPAMRTTRNFFILNLALSDFFVCIVTAPTTLYTVLYMFWPFSRTLCKIAGSLQGFNIFLSTFSIASIAVDRYVLIIFPTKRERQQNLSFCFFIMIWVISLILAVPLLQASDLTPVFVEPSCDLALYICHEQNEIWEKMIISKGTYTLAVLITQYAFPLFSLVFAYSRIAHRMKLRFANRNQNVTTNTNTSQRRRSVVERQRRTHLLLVCVVAVFAVAWLPLNVFHIFNTFELVNSFSVTTFSICHCLAMCSACLNPLIYAFFNHNFRIEFMHLFDRVGLRSLRVVIFGEQESLKKSMRTEFRSRGGCKTVTTAEPATFQRMNESMILSAMEQDEQL.

Residues 1 to 45 (MGSVNESCDNYVEIFNKINYFFRDDQVINGTEYSPKEFGYFITFA) lie on the Extracellular side of the membrane. N-linked (GlcNAc...) asparagine glycans are attached at residues Asn5 and Asn29. The chain crosses the membrane as a helical span at residues 46–66 (YMLIILFGAIGNFLTIIVVIL). The Cytoplasmic segment spans residues 67-85 (NPAMRTTRNFFILNLALSD). Residues 86–106 (FFVCIVTAPTTLYTVLYMFWP) form a helical membrane-spanning segment. Topologically, residues 107-122 (FSRTLCKIAGSLQGFN) are extracellular. The cysteines at positions 112 and 194 are disulfide-linked. A helical transmembrane segment spans residues 123–143 (IFLSTFSIASIAVDRYVLIIF). Residues 144–152 (PTKRERQQN) are Cytoplasmic-facing. Residues 153–173 (LSFCFFIMIWVISLILAVPLL) form a helical membrane-spanning segment. Residues 174-210 (QASDLTPVFVEPSCDLALYICHEQNEIWEKMIISKGT) are Extracellular-facing. A helical transmembrane segment spans residues 211–231 (YTLAVLITQYAFPLFSLVFAY). Over 232–272 (SRIAHRMKLRFANRNQNVTTNTNTSQRRRSVVERQRRTHLL) the chain is Cytoplasmic. A helical membrane pass occupies residues 273–293 (LVCVVAVFAVAWLPLNVFHIF). Topologically, residues 294-306 (NTFELVNSFSVTT) are extracellular. A helical membrane pass occupies residues 307–328 (FSICHCLAMCSACLNPLIYAFF). The Cytoplasmic portion of the chain corresponds to 329 to 402 (NHNFRIEFMH…LSAMEQDEQL (74 aa)).

It belongs to the G-protein coupled receptor 1 family.

It is found in the cell membrane. In terms of biological role, could be a receptor for neuropeptide Y and peptide YY. The protein is Putative neuropeptide Y receptor 11 (npr-11) of Caenorhabditis elegans.